The sequence spans 154 residues: Large ribosomal subunit protein bL9 (154 aa).

This sequence belongs to the bacterial ribosomal protein bL9 family.

Its function is as follows. Binds to the 23S rRNA. In Buchnera aphidicola subsp. Baizongia pistaciae (strain Bp), this protein is Large ribosomal subunit protein bL9.